The primary structure comprises 28 residues: Ranatuerin-2BYb (28 aa).

Cys23 and Cys28 form a disulfide bridge.

Expressed by the skin glands.

It localises to the secreted. Functionally, antibacterial activity against Gram-negative bacterium E.coli. Very weak hemolysis activity. In Rana boylii (Foothill yellow-legged frog), this protein is Ranatuerin-2BYb.